Here is a 142-residue protein sequence, read N- to C-terminus: Large ribosomal subunit protein uL13 (142 aa).

The protein belongs to the universal ribosomal protein uL13 family. Part of the 50S ribosomal subunit.

This protein is one of the early assembly proteins of the 50S ribosomal subunit, although it is not seen to bind rRNA by itself. It is important during the early stages of 50S assembly. The polypeptide is Large ribosomal subunit protein uL13 (Akkermansia muciniphila (strain ATCC BAA-835 / DSM 22959 / JCM 33894 / BCRC 81048 / CCUG 64013 / CIP 107961 / Muc)).